The chain runs to 268 residues: Undecaprenyl-diphosphatase (268 aa).

A run of 8 helical transmembrane segments spans residues 4–24 (STTLVALVLGLLEGLTEFIPV), 50–70 (IQLGAVLAVLTVYASKLISVI), 84–104 (AAVLLAFLPAVVVGVMAHGFI), 109–129 (FETPILIAIMLILGGIILLFV), 144–164 (VPLGVALKIGFFQCLAMVPGV), 184–204 (AAEFSFFLSMPTMAGAFAFDL), 214–234 (GALGEIAVGFVAAFLAAVLVV), and 245–265 (GYSLFGWWRIIVGSIALAALL).

This sequence belongs to the UppP family.

Its subcellular location is the cell inner membrane. The enzyme catalyses di-trans,octa-cis-undecaprenyl diphosphate + H2O = di-trans,octa-cis-undecaprenyl phosphate + phosphate + H(+). In terms of biological role, catalyzes the dephosphorylation of undecaprenyl diphosphate (UPP). Confers resistance to bacitracin. This is Undecaprenyl-diphosphatase from Cereibacter sphaeroides (strain ATCC 17025 / ATH 2.4.3) (Rhodobacter sphaeroides).